The primary structure comprises 292 residues: 4-hydroxy-tetrahydrodipicolinate synthase (292 aa).

T45 lines the pyruvate pocket. The active-site Proton donor/acceptor is Y133. The active-site Schiff-base intermediate with substrate is K161. I203 provides a ligand contact to pyruvate.

It belongs to the DapA family. In terms of assembly, homotetramer; dimer of dimers.

The protein resides in the cytoplasm. The enzyme catalyses L-aspartate 4-semialdehyde + pyruvate = (2S,4S)-4-hydroxy-2,3,4,5-tetrahydrodipicolinate + H2O + H(+). Its pathway is amino-acid biosynthesis; L-lysine biosynthesis via DAP pathway; (S)-tetrahydrodipicolinate from L-aspartate: step 3/4. Catalyzes the condensation of (S)-aspartate-beta-semialdehyde [(S)-ASA] and pyruvate to 4-hydroxy-tetrahydrodipicolinate (HTPA). The chain is 4-hydroxy-tetrahydrodipicolinate synthase from Nitrosomonas europaea (strain ATCC 19718 / CIP 103999 / KCTC 2705 / NBRC 14298).